The primary structure comprises 307 residues: Ribonuclease Z (307 aa).

Zn(2+) contacts are provided by His61, His63, Asp65, His66, His138, Asp208, and His264. Catalysis depends on Asp65, which acts as the Proton acceptor.

It belongs to the RNase Z family. In terms of assembly, homodimer. The cofactor is Zn(2+).

It carries out the reaction Endonucleolytic cleavage of RNA, removing extra 3' nucleotides from tRNA precursor, generating 3' termini of tRNAs. A 3'-hydroxy group is left at the tRNA terminus and a 5'-phosphoryl group is left at the trailer molecule.. Zinc phosphodiesterase, which displays some tRNA 3'-processing endonuclease activity. Probably involved in tRNA maturation, by removing a 3'-trailer from precursor tRNA. In Pyrococcus horikoshii (strain ATCC 700860 / DSM 12428 / JCM 9974 / NBRC 100139 / OT-3), this protein is Ribonuclease Z.